The following is a 185-amino-acid chain: GTP cyclohydrolase 1 (185 aa).

C76, H79, and C147 together coordinate Zn(2+).

This sequence belongs to the GTP cyclohydrolase I family. Toroid-shaped homodecamer, composed of two pentamers of five dimers.

It catalyses the reaction GTP + H2O = 7,8-dihydroneopterin 3'-triphosphate + formate + H(+). Its pathway is cofactor biosynthesis; 7,8-dihydroneopterin triphosphate biosynthesis; 7,8-dihydroneopterin triphosphate from GTP: step 1/1. This Clostridium perfringens (strain 13 / Type A) protein is GTP cyclohydrolase 1.